Here is a 367-residue protein sequence, read N- to C-terminus: Alginate lyase (367 aa).

The first 24 residues, 1–24, serve as a signal peptide directing secretion; that stretch reads MTIFKRISSPALLALALFGGAAHA. Residues 63-64, 136-137, and Tyr254 each bind substrate; these read SK and HT.

The protein belongs to the polysaccharide lyase 5 family.

It localises to the periplasm. It carries out the reaction Eliminative cleavage of alginate to give oligosaccharides with 4-deoxy-alpha-L-erythro-hex-4-enuronosyl groups at their non-reducing ends and beta-D-mannuronate at their reducing end.. Its function is as follows. Catalyzes the depolymerization of alginate by cleaving the beta-1,4 glycosidic bond between two adjacent sugar residues via a beta-elimination mechanism. May serve to degrade mislocalized alginate that is trapped in the periplasmic space. The sequence is that of Alginate lyase from Pseudomonas putida (strain ATCC 700007 / DSM 6899 / JCM 31910 / BCRC 17059 / LMG 24140 / F1).